The chain runs to 64 residues: Translation machinery-associated protein 7 homolog (64 aa).

Residues Met-1 to Lys-64 are disordered. Positions Asp-21–Arg-50 form a coiled coil. The span at Glu-28–Ala-44 shows a compositional bias: basic and acidic residues. A compositionally biased stretch (gly residues) spans Leu-53–Lys-64.

Belongs to the TMA7 family.

This chain is Translation machinery-associated protein 7 homolog, found in Caenorhabditis briggsae.